Here is a 472-residue protein sequence, read N- to C-terminus: Argininosuccinate lyase (472 aa).

It belongs to the lyase 1 family. Argininosuccinate lyase subfamily.

The protein resides in the cytoplasm. It carries out the reaction 2-(N(omega)-L-arginino)succinate = fumarate + L-arginine. It functions in the pathway amino-acid biosynthesis; L-arginine biosynthesis; L-arginine from L-ornithine and carbamoyl phosphate: step 3/3. The protein is Argininosuccinate lyase of Syntrophus aciditrophicus (strain SB).